The chain runs to 316 residues: Acetyl-coenzyme A carboxylase carboxyl transferase subunit alpha (316 aa).

The CoA carboxyltransferase C-terminal domain occupies arginine 39–serine 293.

This sequence belongs to the AccA family. As to quaternary structure, acetyl-CoA carboxylase is a heterohexamer composed of biotin carboxyl carrier protein (AccB), biotin carboxylase (AccC) and two subunits each of ACCase subunit alpha (AccA) and ACCase subunit beta (AccD).

It is found in the cytoplasm. The catalysed reaction is N(6)-carboxybiotinyl-L-lysyl-[protein] + acetyl-CoA = N(6)-biotinyl-L-lysyl-[protein] + malonyl-CoA. The protein operates within lipid metabolism; malonyl-CoA biosynthesis; malonyl-CoA from acetyl-CoA: step 1/1. Component of the acetyl coenzyme A carboxylase (ACC) complex. First, biotin carboxylase catalyzes the carboxylation of biotin on its carrier protein (BCCP) and then the CO(2) group is transferred by the carboxyltransferase to acetyl-CoA to form malonyl-CoA. The polypeptide is Acetyl-coenzyme A carboxylase carboxyl transferase subunit alpha (Azotobacter vinelandii (strain DJ / ATCC BAA-1303)).